Here is a 171-residue protein sequence, read N- to C-terminus: 6,7-dimethyl-8-ribityllumazine synthase (171 aa).

5-amino-6-(D-ribitylamino)uracil is bound by residues phenylalanine 24, 58–60 (ALE), and 82–84 (AVI). Position 87 to 88 (87 to 88 (ET)) interacts with (2S)-2-hydroxy-3-oxobutyl phosphate. Histidine 90 acts as the Proton donor in catalysis. A 5-amino-6-(D-ribitylamino)uracil-binding site is contributed by asparagine 115. Arginine 129 is a (2S)-2-hydroxy-3-oxobutyl phosphate binding site. The segment at 150 to 171 (ALDQLGDDEDEEEDEDDEEERA) is disordered. Residues 154 to 171 (LGDDEDEEEDEDDEEERA) show a composition bias toward acidic residues.

It belongs to the DMRL synthase family.

It carries out the reaction (2S)-2-hydroxy-3-oxobutyl phosphate + 5-amino-6-(D-ribitylamino)uracil = 6,7-dimethyl-8-(1-D-ribityl)lumazine + phosphate + 2 H2O + H(+). Its pathway is cofactor biosynthesis; riboflavin biosynthesis; riboflavin from 2-hydroxy-3-oxobutyl phosphate and 5-amino-6-(D-ribitylamino)uracil: step 1/2. Its function is as follows. Catalyzes the formation of 6,7-dimethyl-8-ribityllumazine by condensation of 5-amino-6-(D-ribitylamino)uracil with 3,4-dihydroxy-2-butanone 4-phosphate. This is the penultimate step in the biosynthesis of riboflavin. The polypeptide is 6,7-dimethyl-8-ribityllumazine synthase (Burkholderia cenocepacia (strain HI2424)).